The primary structure comprises 109 residues: Cell division protein ZapA (109 aa).

Positions 21–97 (PDQRDALNQA…QTIEQALLDQ (77 aa)) form a coiled coil.

Belongs to the ZapA family. Type 1 subfamily. Homodimer. Interacts with FtsZ.

It localises to the cytoplasm. Its function is as follows. Activator of cell division through the inhibition of FtsZ GTPase activity, therefore promoting FtsZ assembly into bundles of protofilaments necessary for the formation of the division Z ring. It is recruited early at mid-cell but it is not essential for cell division. The protein is Cell division protein ZapA of Salmonella agona (strain SL483).